The chain runs to 155 residues: RNA pyrophosphohydrolase (155 aa).

In terms of domain architecture, Nudix hydrolase spans Gly-6–Thr-148. The short motif at Gly-38 to Gly-59 is the Nudix box element.

This sequence belongs to the Nudix hydrolase family. RppH subfamily. Requires a divalent metal cation as cofactor.

In terms of biological role, accelerates the degradation of transcripts by removing pyrophosphate from the 5'-end of triphosphorylated RNA, leading to a more labile monophosphorylated state that can stimulate subsequent ribonuclease cleavage. The chain is RNA pyrophosphohydrolase from Francisella philomiragia subsp. philomiragia (strain ATCC 25017 / CCUG 19701 / FSC 153 / O#319-036).